A 196-amino-acid chain; its full sequence is Probable GTP-binding protein EngB (196 aa).

An EngB-type G domain is found at K22–V195. Residues G30 to S37, G57 to T61, D75 to G78, T142 to D145, and F174 to A176 contribute to the GTP site. Mg(2+) is bound by residues S37 and T59.

Belongs to the TRAFAC class TrmE-Era-EngA-EngB-Septin-like GTPase superfamily. EngB GTPase family. Mg(2+) is required as a cofactor.

In terms of biological role, necessary for normal cell division and for the maintenance of normal septation. The polypeptide is Probable GTP-binding protein EngB (Ligilactobacillus salivarius (strain UCC118) (Lactobacillus salivarius)).